The chain runs to 465 residues: UDP-N-acetylmuramate--L-alanine ligase (465 aa).

ATP is bound at residue 112–118; sequence GTHGKTT.

The protein belongs to the MurCDEF family.

The protein localises to the cytoplasm. It catalyses the reaction UDP-N-acetyl-alpha-D-muramate + L-alanine + ATP = UDP-N-acetyl-alpha-D-muramoyl-L-alanine + ADP + phosphate + H(+). It participates in cell wall biogenesis; peptidoglycan biosynthesis. In terms of biological role, cell wall formation. This chain is UDP-N-acetylmuramate--L-alanine ligase, found in Burkholderia mallei (strain NCTC 10247).